A 184-amino-acid chain; its full sequence is Ras-related protein Rap-1b (184 aa).

10 to 18 (GSGGVGKSA) contacts GTP. The tract at residues 25–67 (QGIFVEKYDPTIEDSYRKQVEVDAQQCMLEILDTAGTEQFTAM) is interaction with KRIT1. The Effector region motif lies at 32-40 (YDPTIEDSY). GTP contacts are provided by residues 57 to 61 (DTAGT), 116 to 119 (NKCD), and 147 to 149 (SAK). S179 is modified (phosphoserine; by PKA). C181 carries the post-translational modification Cysteine methyl ester. C181 is lipidated: S-geranylgeranyl cysteine. A propeptide spans 182–184 (QLL) (removed in mature form).

Heterodimer with RAP1GAP. Interacts with EPAC2. Interacts with SGSM1. Interacts with SGSM2. Interacts with SGSM3. Interacts with KRIT1. Interacts with RAP1GDS1.

The protein localises to the cell membrane. It is found in the cytoplasm. Its subcellular location is the cytosol. The protein resides in the cell junction. The enzyme catalyses GTP + H2O = GDP + phosphate + H(+). Its activity is regulated as follows. Activated by guanine nucleotide-exchange factor (GEF) EPAC2 in a cAMP-dependent manner. Functionally, GTP-binding protein that possesses intrinsic GTPase activity. Contributes to the polarizing activity of KRIT1 and CDH5 in the establishment and maintenance of correct endothelial cell polarity and vascular lumen. Required for the localization of phosphorylated PRKCZ, PARD3 and TIAM1 to the cell junction. Plays a role in the establishment of basal endothelial barrier function. This Bos taurus (Bovine) protein is Ras-related protein Rap-1b (RAP1B).